A 232-amino-acid chain; its full sequence is 5'-methylthioadenosine/S-adenosylhomocysteine nucleosidase (232 aa).

The active-site Proton acceptor is glutamate 12. Substrate is bound by residues glycine 78, methionine 153, and 174–175 (ME). Aspartate 198 acts as the Proton donor in catalysis.

The protein belongs to the PNP/UDP phosphorylase family. MtnN subfamily.

It catalyses the reaction S-adenosyl-L-homocysteine + H2O = S-(5-deoxy-D-ribos-5-yl)-L-homocysteine + adenine. The catalysed reaction is S-methyl-5'-thioadenosine + H2O = 5-(methylsulfanyl)-D-ribose + adenine. It carries out the reaction 5'-deoxyadenosine + H2O = 5-deoxy-D-ribose + adenine. The protein operates within amino-acid biosynthesis; L-methionine biosynthesis via salvage pathway; S-methyl-5-thio-alpha-D-ribose 1-phosphate from S-methyl-5'-thioadenosine (hydrolase route): step 1/2. Its function is as follows. Catalyzes the irreversible cleavage of the glycosidic bond in both 5'-methylthioadenosine (MTA) and S-adenosylhomocysteine (SAH/AdoHcy) to adenine and the corresponding thioribose, 5'-methylthioribose and S-ribosylhomocysteine, respectively. Also cleaves 5'-deoxyadenosine, a toxic by-product of radical S-adenosylmethionine (SAM) enzymes, into 5-deoxyribose and adenine. This is 5'-methylthioadenosine/S-adenosylhomocysteine nucleosidase from Geobacillus sp. (strain WCH70).